A 278-amino-acid chain; its full sequence is tRNA pseudouridine synthase A (278 aa).

Catalysis depends on D61, which acts as the Nucleophile. A substrate-binding site is contributed by Y119.

The protein belongs to the tRNA pseudouridine synthase TruA family. Homodimer.

It catalyses the reaction uridine(38/39/40) in tRNA = pseudouridine(38/39/40) in tRNA. Functionally, formation of pseudouridine at positions 38, 39 and 40 in the anticodon stem and loop of transfer RNAs. This is tRNA pseudouridine synthase A from Oleidesulfovibrio alaskensis (strain ATCC BAA-1058 / DSM 17464 / G20) (Desulfovibrio alaskensis).